We begin with the raw amino-acid sequence, 533 residues long: NADH-quinone oxidoreductase subunit N (533 aa).

Transmembrane regions (helical) follow at residues 13 to 33 (VWPLLVVFGVAAVGVLVEGFV), 40 to 60 (LVQAALAIAGVVVALVGTILV), 87 to 107 (PALFIWGMLLVFALGGALLFA), 141 to 161 (HTEVYPLMMFALGGMMLFAAA), 164 to 184 (LLTLFVALEVLSLPLYLLSGL), 200 to 220 (FMLGAFSSGFFLYGAALVYGF), 243 to 263 (LLIGIGMLSVGLLFKVGAVPF), 275 to 295 (PTAVTAFMAAGTKIAAFGAML), 310 to 330 (QPMLWIIAILTMLVGALIAIV), 337 to 357 (MLAYSSVAHTGFLLTGVLGVQ), 373 to 393 (VLFYLVTYGFAVVGAFAVVTL), 417 to 437 (VAGVFAFFLLSMAGIPLTAGF), 451 to 471 (GAWPVVIAAVLCSIIAVFFYV), and 502 to 522 (ATIFVGVAATLVLGVVPGPVL).

This sequence belongs to the complex I subunit 2 family. NDH-1 is composed of 14 different subunits. Subunits NuoA, H, J, K, L, M, N constitute the membrane sector of the complex.

Its subcellular location is the cell membrane. The enzyme catalyses a quinone + NADH + 5 H(+)(in) = a quinol + NAD(+) + 4 H(+)(out). Functionally, NDH-1 shuttles electrons from NADH, via FMN and iron-sulfur (Fe-S) centers, to quinones in the respiratory chain. The immediate electron acceptor for the enzyme in this species is believed to be a menaquinone. Couples the redox reaction to proton translocation (for every two electrons transferred, four hydrogen ions are translocated across the cytoplasmic membrane), and thus conserves the redox energy in a proton gradient. In Nocardioides sp. (strain ATCC BAA-499 / JS614), this protein is NADH-quinone oxidoreductase subunit N.